Consider the following 534-residue polypeptide: Probable RNA-binding protein 46 (534 aa).

3 consecutive RRM domains span residues Cys-61–Asp-139, Cys-141–Pro-223, and Lys-236–Pro-308.

The protein localises to the cytoplasm. Its function is as follows. Essential for male and female fertility, playing a crucial role in regulating germ cell development by ensuring the proper progression of meiosis prophase I. This is Probable RNA-binding protein 46 (rbm46) from Xenopus tropicalis (Western clawed frog).